A 354-amino-acid chain; its full sequence is uncharacterized protein (354 aa).

This sequence belongs to the asfivirus B354L family.

This is an uncharacterized protein from Ornithodoros (relapsing fever ticks).